A 158-amino-acid chain; its full sequence is UPAR/Ly6 domain-containing protein crim (158 aa).

The signal sequence occupies residues 1-22; the sequence is MHYHTNLIAALLLAALIHEGSA. Residues 23-136 are Extracellular-facing; that stretch reads IWCYRCTSAT…FCFLDHRCNG (114 aa). Asn-107 carries N-linked (GlcNAc...) asparagine glycosylation. Asn-135 is lipidated: GPI-anchor amidated asparagine. A propeptide spans 136–158 (removed in mature form); that stretch reads GASGLQTSAVIGLLTLIPALLLR. A helical membrane pass occupies residues 137-157; the sequence is ASGLQTSAVIGLLTLIPALLL. Arg-158 is a topological domain (cytoplasmic).

This sequence belongs to the quiver family.

It is found in the membrane. Required for septate junction assembly possibly by organizing the preassembly and transport of septate junction proteins. Involved in epithelial cell septate junction-mediated paracellular barrier functions of trachea, hindgut and salivary gland. This is UPAR/Ly6 domain-containing protein crim from Drosophila melanogaster (Fruit fly).